The chain runs to 927 residues: BTB/POZ domain-containing protein KCTD19 (927 aa).

Residues 18-72 (NVGGWHFSVPRSKLAQFPDSLLWKEASALTSSENQRLFIDRDGSTFRHVHYYLYT) enclose the BTB 1 domain. Phosphoserine is present on Ser270. One can recognise a BTB 2 domain in the interval 399–486 (IKLYVGSHWY…YHIPALSEAL (88 aa)). The segment at 664–760 (VEEASLHVPS…NANGTDNPGA (97 aa)) is disordered. Positions 731 to 743 (DWGKQRPKDRESP) are enriched in basic and acidic residues.

Identified in a complex with ZNF541, HDAC1 and HSPA2. Identified in a complex with ZNF541 and HDAC1. Identified in a complex with HDAC1, HDAC2, DNTTIP1 and ZNF541. In terms of tissue distribution, detected in adult testis.

The protein resides in the nucleus. Its function is as follows. Transcription regulator which is essential for male fertility and for the completion of meiotic prophase in spermatocytes. Regulates progression of the pachytene stage of meiotic prophase and promotes the transcriptional activation activity ZNF541. Required for the organization of chromosomes during metaphase I. The sequence is that of BTB/POZ domain-containing protein KCTD19 (Kctd19) from Mus musculus (Mouse).